The primary structure comprises 461 residues: Glycerol-3-phosphate acyltransferase, chloroplastic (461 aa).

The transit peptide at 1–96 directs the protein to the chloroplast; the sequence is MSMTGSSAYY…SPPNMSASVS (96 aa). A compositionally biased stretch (low complexity) spans 47–76; it reads LLSSTSSSSSSSISLRSSTAPSPSCSSVTP. Residues 47-88 are disordered; that stretch reads LLSSTSSSSSSSISLRSSTAPSPSCSSVTPKDNCLASAKHSP. Positions 231–236 match the HXXXXD motif motif; sequence HQTEAD.

Belongs to the GPAT/DAPAT family.

Its subcellular location is the plastid. The protein localises to the chloroplast stroma. It catalyses the reaction sn-glycerol 3-phosphate + an acyl-CoA = a 1-acyl-sn-glycero-3-phosphate + CoA. Its pathway is phospholipid metabolism; CDP-diacylglycerol biosynthesis; CDP-diacylglycerol from sn-glycerol 3-phosphate: step 1/3. Esterifies acyl-group from acyl-ACP to the sn-1 position of glycerol-3-phosphate. The enzyme from chilling-resistant plants discriminates against non-fluid palmitic acid and selects oleic acid whereas the enzyme from sensitive plants accepts both fatty acids. The sequence is that of Glycerol-3-phosphate acyltransferase, chloroplastic (PLSB) from Phaseolus vulgaris (Kidney bean).